A 419-amino-acid polypeptide reads, in one-letter code: 20-hydroxy-prefusarin hydrolase FUS2 (419 aa).

Residue Ser-238 is part of the active site.

This sequence belongs to the AB hydrolase superfamily. FUS2 hydrolase family.

It participates in mycotoxin biosynthesis. Functionally, 20-hydroxy-prefusarin hydrolase; part of the gene cluster that mediates the biosynthesis of the mycotoxin fusarin C. Within the cluster, FUS1, FUS2, FUS8 and FUS9 are sufficient for fusarin production. The roles of the other FUS members are yet undetermined. The fusarin C synthetase FUS1 is responsible for the condensation of one acetyl-coenzyme A (CoA) unit with six malonyl-CoA units and the amide linkage of the arising heptaketide and homoserine, subsequently releasing the first intermediate, prefusarin, as an alcohol with an open ring structure. The cytochrome P450 monooxygenase FUS8 participates in multiple oxidation processes at carbon C-20 and is able to use the FUS1 product as substrate, resulting in formation of 20-hydroxy-prefusarin. This reaction seems to be essential before the 2-pyrrolidone ring closure can be catalyzed by FUS2, generating 20-hydroxy-fusarin. FUS8 is able to further oxidizes carbon C-20 after ring closure, resulting in the formation of carboxy-fusarin C. As the last step, FUS9 methylates the hydroxyl group at C-21 to generate fusarin C. Fusarin C can then rearrange to epi-fusarin C, the (z)-isomers, and fusarin A and fusarin D. The polypeptide is 20-hydroxy-prefusarin hydrolase FUS2 (Gibberella moniliformis (strain M3125 / FGSC 7600) (Maize ear and stalk rot fungus)).